A 223-amino-acid polypeptide reads, in one-letter code: Probable transaldolase (223 aa).

The active-site Schiff-base intermediate with substrate is the lysine 86.

The protein belongs to the transaldolase family. Type 3B subfamily.

The protein localises to the cytoplasm. It catalyses the reaction D-sedoheptulose 7-phosphate + D-glyceraldehyde 3-phosphate = D-erythrose 4-phosphate + beta-D-fructose 6-phosphate. Its pathway is carbohydrate degradation; pentose phosphate pathway; D-glyceraldehyde 3-phosphate and beta-D-fructose 6-phosphate from D-ribose 5-phosphate and D-xylulose 5-phosphate (non-oxidative stage): step 2/3. Its function is as follows. Transaldolase is important for the balance of metabolites in the pentose-phosphate pathway. The protein is Probable transaldolase (tal) of Thermoplasma volcanium (strain ATCC 51530 / DSM 4299 / JCM 9571 / NBRC 15438 / GSS1).